The following is a 471-amino-acid chain: RGCGTAGCRRTWRGRPTAVGRVALHWAAGAGHEQAVRLLLEHEAAVDEEDAFGMNALLLSAWFGHLRILQILVNSGAKIHCKSKDGLTLLHCAAQKGHVPVLAFIMEDLEDVALDHVDKLGRTAFHRAAEHGQLDALDFLVGSGCDHSVKDKEGNTALHLAAGRGHMAVLQRLVDIGLDLEEQNAEGLTALHAAAGGTHPHCVRLLLRAGSTVNALTQKNLSCLHYAALSGSEDVSRVLIHAGGCTNVADHGASPLHLAVMHNFPALVQLLINSDSDLNAMDNRQQTPLHLAAEHAWQDIAEMLLIAGVDLNLRDKQGKTALAVAARSNHVSLVDMIIKADRFYKWEKDHLSCRDLSDPSGKSLSFKQDHRQETQQLRSVLWRLASRHLQPREWKKLAYSWDFTEAHVYAIEQQWTGTRSYQEHGHRMLLIWLHGVSTAGENPSKALFEGLVTIGRRDLAELAVASVGAYI.

ANK repeat units lie at residues 19–48 (VGRV…AVDE), 52–81 (FGMN…KIHC), 85–114 (DGLT…DVAL), 120–149 (LGRT…DHSV), 153–182 (EGNT…DLEE), 186–215 (EGLT…TVNA), 219–248 (KNLS…CTNV), 251–280 (HGAS…DLNA), 284–313 (RQQT…DLNL), and 317–346 (QGKT…FYKW). The Death domain occupies 379 to 467 (SVLWRLASRH…DLAELAVASV (89 aa)).

In Macaca fascicularis (Crab-eating macaque), this protein is Ankyrin repeat and death domain-containing protein 1A (ANKDD1A).